A 445-amino-acid polypeptide reads, in one-letter code: Phosphoglucosamine mutase (445 aa).

Serine 102 functions as the Phosphoserine intermediate in the catalytic mechanism. Mg(2+)-binding residues include serine 102, aspartate 241, aspartate 243, and aspartate 245. Serine 102 carries the phosphoserine modification.

It belongs to the phosphohexose mutase family. It depends on Mg(2+) as a cofactor. In terms of processing, activated by phosphorylation.

The catalysed reaction is alpha-D-glucosamine 1-phosphate = D-glucosamine 6-phosphate. Catalyzes the conversion of glucosamine-6-phosphate to glucosamine-1-phosphate. This Serratia proteamaculans (strain 568) protein is Phosphoglucosamine mutase.